Reading from the N-terminus, the 231-residue chain is Antiholin-like protein LrgB (231 aa).

Helical transmembrane passes span 7 to 24, 34 to 56, 91 to 113, 149 to 171, and 207 to 229; these read PYFG…GTFL, FTPL…FSYA, WWQI…YLLA, ITAF…FLKV, and ASIA…VQLI.

Belongs to the CidB/LrgB family. LrgB subfamily.

It is found in the cell membrane. Its function is as follows. Inhibits the expression or activity of extracellular murein hydrolases by interacting, possibly with LrgA, with the holin-like protein CidA. The LrgAB and CidA proteins may affect the proton motive force of the membrane. May be involved in programmed cell death (PCD), possibly triggering PCD in response to antibiotics and environmental stresses. The polypeptide is Antiholin-like protein LrgB (Bacillus subtilis (strain 168)).